A 185-amino-acid chain; its full sequence is Elongation factor P (185 aa).

The protein belongs to the elongation factor P family.

It localises to the cytoplasm. The protein operates within protein biosynthesis; polypeptide chain elongation. Involved in peptide bond synthesis. Stimulates efficient translation and peptide-bond synthesis on native or reconstituted 70S ribosomes in vitro. Probably functions indirectly by altering the affinity of the ribosome for aminoacyl-tRNA, thus increasing their reactivity as acceptors for peptidyl transferase. This chain is Elongation factor P, found in Clostridium kluyveri (strain ATCC 8527 / DSM 555 / NBRC 12016 / NCIMB 10680 / K1).